Consider the following 2049-residue polypeptide: Polyunsaturated fatty acid synthase subunit B (2049 aa).

Ketosynthase family 3 (KS3) domains follow at residues 15 to 442 (EKRI…VFEE) and 468 to 908 (NMRI…LLSD). Residues C196, H333, and H368 each act as for beta-ketoacyl synthase 1 activity in the active site. Residues 467–984 (NNMRIAITGM…LGETLAQEAD (518 aa)) are chain length factor (CLF) domain. Residues 1044–1377 (RVAFMYGEGR…QRSHVTGAMD (334 aa)) are acyltransferase (AT) domain. A disordered region spans residues 1500-1531 (NKDNQPAVAPAATAAPTPKPKPAASSGKPVPS). The span at 1505-1531 (PAVAPAATAAPTPKPKPAASSGKPVPS) shows a compositional bias: low complexity. Residues 1579-1887 (SRAFMKTYGV…SRANKLYELF (309 aa)) are enoyl reductase (ER) domain.

In terms of assembly, component of the polyunsaturated fatty acid synthase complex composed of at least ORF-A, ORF-B and ORF-C.

It participates in lipid metabolism; fatty acid biosynthesis. Its function is as follows. Poliketide synthase-like protein; part of the polyunsaturated fatty acid synthase composed of the 3 PKS-like subunits A, B and C. While the saturated fatty acids (SFAs) in Thraustochytrium are produced by the conventional fatty acid synthase (FAS) pathway, polyunsaturated fatty acids (PUFAs) including docosahexeanoic acid (DHA) and docosapentaenoic acid (DPA) are synthesized via an anaerobical PKS pathway. PUFA synthase assimilates fatty acyl-CoA, the product of FAS, as the starter unit to synthesize DPA, and this starter unit may be butyryl-CoA, hexanoyl-CoA, or octanoyl-CoA. DPA and DHA biosynthesis seem to differ by the reduction at the N-3 position by PUFA synthase, not the extension of carbon chain. In DHA biosynthesis, PUFA synthase extends the fatty acyl chain from the methyl toward the carboxyl end, and the double bond is formed when the carbon chain is growing, instead of afterward. Therefore, PUFA synthase is unable to transform DPA to DHA, suggesting that DPA is not the precursor of DHA. Moreover, DPA molecule is partly extended by FAS KS domain, so DPA biosynthesis is less dependent on PUFA synthase KS domain than DHA. This chain is Polyunsaturated fatty acid synthase subunit B, found in Thraustochytrium sp. (strain ATCC 26185 / S-3).